Here is a 335-residue protein sequence, read N- to C-terminus: UPF0324 membrane protein gbs1193 (335 aa).

A run of 9 helical transmembrane segments spans residues 20–42 (SWLLGLYLPLIGAPVFAILIGII), 57–79 (IAFTSKYILQTAVVLLGFGLNLM), 84–106 (VGISSLPIIIMTISISLIIAYVL), 116–138 (IATLIGVGSSICGGSAIAATAPV), 151–173 (SVIFLFNILAALIFPTLGNFIGL), 210–232 (GATIVKLTRTLAIIPITIVLSIY), 253–275 (VLYFILASLLTTIVASLGFSLRI), 285–304 (FFIVMAMGAIGINTNVSKLI), and 311–333 (ILLGAACWLGIIIVSLTMQAILG).

This sequence belongs to the UPF0324 family.

The protein resides in the cell membrane. This is UPF0324 membrane protein gbs1193 from Streptococcus agalactiae serotype III (strain NEM316).